A 185-amino-acid polypeptide reads, in one-letter code: Ribosome maturation factor RimM (185 aa).

In terms of domain architecture, PRC barrel spans 92–168 (DDDTFYHADL…GRRVVVAEAF (77 aa)).

The protein belongs to the RimM family. Binds ribosomal protein uS19.

The protein resides in the cytoplasm. Its function is as follows. An accessory protein needed during the final step in the assembly of 30S ribosomal subunit, possibly for assembly of the head region. Essential for efficient processing of 16S rRNA. May be needed both before and after RbfA during the maturation of 16S rRNA. It has affinity for free ribosomal 30S subunits but not for 70S ribosomes. This Xanthobacter autotrophicus (strain ATCC BAA-1158 / Py2) protein is Ribosome maturation factor RimM.